The chain runs to 242 residues: Beta-carotene ketolase (242 aa).

It catalyses the reaction all-trans-beta-carotene + 2 AH2 + 2 O2 = echinenone + 2 A + 3 H2O. The enzyme catalyses echinenone + 2 AH2 + 2 O2 = canthaxanthin + 2 A + 3 H2O. Its pathway is carotenoid biosynthesis; astaxanthin biosynthesis. Converts beta-carotene to canthaxanthin via echinenone. The polypeptide is Beta-carotene ketolase (crtW) (Paracoccus sp. (strain N81106 / MBIC 01143) (Agrobacterium aurantiacum)).